The following is a 555-amino-acid chain: MKKYMGIIVDAISRRQFKGEITVENGKIIRVEEKEHDNEQYILPGLVDAHVHIESSMTVPSVFARMAVAKGTVAVVSDPHEIANVMGEEGIEFMLEDSKKSPLKVYFGVPSCVPATPFESSGAVLDINAVDRLLAKDDLHYLSEMMNFPGVILEFPDVMAKLESARKHGKVIDGHAPGLRGADLQKYIGAGISTDHECFEYEEAREKIELGMKILIREGSSARNFETLYPLIDEYPDHVMLCTDDSHPDTLIYEGHIDKLIRRGQEKGLDIYNLIRTAVFNPVEHYGLNVGLLREGDPADFIIVDNLKSFNILSTFIDGECVYENGKVLFPLEKVPAKNVFNRNKISIDDVKLVPPAGAIQEQTTEKGIKKIRVIVANDGELVTGQELIVPKIENGNLVSDPERDILKMVVLSRYSDDPVRIGFIKNIGLEKGAIASSIAHDSHNIIAVGATDEDIVETVNRLIKNKGGIAVGTAENLLDLPLEVAGLMSTLEGEEVASRYHLLNEEARKLGTSLESPFMTLAFMSLLVIPELKLGDKGLFDVTKFEFVDLFADE.

This sequence belongs to the metallo-dependent hydrolases superfamily. Adenine deaminase family. Mn(2+) serves as cofactor.

It carries out the reaction adenine + H2O + H(+) = hypoxanthine + NH4(+). This is Adenine deaminase from Methanosarcina mazei (strain ATCC BAA-159 / DSM 3647 / Goe1 / Go1 / JCM 11833 / OCM 88) (Methanosarcina frisia).